Consider the following 342-residue polypeptide: MTSLTLALDAMGGDHGPHVTVPAALRALQLHSFLQIILVGDKTEIDVYLRQADPQLLSRIEVIHTDEVVSMSDRPVHALRTRKNSSMRLAIELVRDARASACVSAGNTGALMAMAKVLLKTLPGIDRPALVSCLPAVTQKPVYLLDLGANVSCDSETLFQFAVMGSVLCEAVDKKSRPKVALLNVGVEEIKGNDQVQQAAQLLQHTEQINYTGFIEGDEIYSGNVDVIVCDGFVGNITLKTSEGIAKLLVHQLKRGLTQGLFVRFLAKLIAPRIQAVLSQMNPDHYNGASLLGLRGIVVKSHGNADETAYLQAISLAVTEAQRRLPEMIKDRLESILLDINN.

It belongs to the PlsX family. As to quaternary structure, homodimer. Probably interacts with PlsY.

Its subcellular location is the cytoplasm. The enzyme catalyses a fatty acyl-[ACP] + phosphate = an acyl phosphate + holo-[ACP]. It functions in the pathway lipid metabolism; phospholipid metabolism. In terms of biological role, catalyzes the reversible formation of acyl-phosphate (acyl-PO(4)) from acyl-[acyl-carrier-protein] (acyl-ACP). This enzyme utilizes acyl-ACP as fatty acyl donor, but not acyl-CoA. This chain is Phosphate acyltransferase, found in Shewanella putrefaciens (strain CN-32 / ATCC BAA-453).